A 947-amino-acid polypeptide reads, in one-letter code: Protocadherin alpha-4 (947 aa).

The first 29 residues, 1–29, serve as a signal peptide directing secretion; that stretch reads MEFSWGSGQESQRLLLSFLFLAIWEPGNS. Cadherin domains are found at residues 30 to 133, 134 to 242, 243 to 350, 351 to 455, 456 to 565, and 573 to 681; these read QLHY…PPTF, PTTQ…SPVF, DRSL…APEL, EFKS…APAF, AQPE…APTL, and SGGI…APSR. At 30–697 the chain is on the extracellular side; sequence QLHYSIPEEA…NAEASLVDVN (668 aa). Cys96 and Cys102 are oxidised to a cystine. Asn257 and Asn265 each carry an N-linked (GlcNAc...) asparagine glycan. The N-linked (GlcNAc...) asparagine glycan is linked to Asn548. The chain crosses the membrane as a helical span at residues 698–718; it reads VYLIIAICAVSSLLVLTLLLY. The Cytoplasmic portion of the chain corresponds to 719–947; sequence SALRCSTVPS…GNSTTDNSDQ (229 aa). PXXP repeat units follow at residues 734 to 737, 774 to 777, 796 to 799, 829 to 832, 870 to 873, and 888 to 891; these read PPKP, PSLS, PRQP, PGGP, PGNP, and PGSP. The 6 X 4 AA repeats of P-X-X-P stretch occupies residues 734-891; the sequence is PPKPVMVCSS…PDKFIIPGSP (158 aa). The required for interaction with FYN stretch occupies residues 738–947; sequence VMVCSSAVGS…GNSTTDNSDQ (210 aa). Disordered regions lie at residues 761–805 and 824–853; these read GEYP…DWRY and ILRAGPGGPDQQWPTVSSATPEPEAGEVSP. Residues 897–947 form a disordered region; that stretch reads RQESANNQIDKSDFITFGKKEETKKKKKKKKGNKTQEKKEKGNSTTDNSDQ. The span at 906–920 shows a compositional bias: basic and acidic residues; it reads DKSDFITFGKKEETK.

Forms homodimers in trans (molecules expressed by two different cells). Forms promiscuous heterodimers in cis (at the plasma membrane of the same cell) with other protocadherins. Interacts with FYN. In terms of tissue distribution, detected in brain.

It localises to the cell membrane. Its function is as follows. Calcium-dependent cell-adhesion protein involved in cells self-recognition and non-self discrimination. Thereby, it is involved in the establishment and maintenance of specific neuronal connections in the brain. This is Protocadherin alpha-4 from Rattus norvegicus (Rat).